A 607-amino-acid chain; its full sequence is Replication protein E1 (607 aa).

The Nuclear localization signal signature appears at 81 to 83 (KRK). Phosphoserine; by host is present on residues Ser87 and Ser95. Positions 94 to 103 (LSPRLQSLNL) match the Nuclear export signal motif. The DNA-binding region stretch occupies residues 147-310 (QGGVGLGHIE…TMIQHQTADS (164 aa)). An SF3 helicase domain is found at 409–559 (LNFIVFLDKF…FPFDSDDKPL (151 aa)). Position 435 to 442 (435 to 442 (GPPDTGKS)) interacts with ATP. A Glycyl lysine isopeptide (Lys-Gly) (interchain with G-Cter in SUMO) cross-link involves residue Lys516. Residues 583–607 (QEDEGEDGSTQRTFQCTTRQVNGPV) are disordered. The segment covering 590–607 (GSTQRTFQCTTRQVNGPV) has biased composition (polar residues).

Belongs to the papillomaviridae E1 protein family. As to quaternary structure, can form hexamers. Interacts with E2 protein; this interaction increases E1 DNA binding specificity. Interacts with host DNA polymerase subunit POLA2. Interacts with host single stranded DNA-binding protein RPA1. Interacts with host TOP1; this interaction stimulates the enzymatic activity of TOP1. In terms of processing, phosphorylated. Post-translationally, sumoylated.

It localises to the host nucleus. It catalyses the reaction Couples ATP hydrolysis with the unwinding of duplex DNA by translocating in the 3'-5' direction.. The enzyme catalyses ATP + H2O = ADP + phosphate + H(+). ATP-dependent DNA 3'-5' helicase required for initiation of viral DNA replication. It forms a complex with the viral E2 protein. The E1-E2 complex binds to the replication origin which contains binding sites for both proteins. During the initial step, a dimer of E1 interacts with a dimer of protein E2 leading to a complex that binds the viral origin of replication with high specificity. Then, a second dimer of E1 displaces the E2 dimer in an ATP-dependent manner to form the E1 tetramer. Following this, two E1 monomers are added to each half of the site, which results in the formation of two E1 trimers on the viral ori. Subsequently, two hexamers will be created. The double hexamer acts as a bi-directional helicase machinery and unwinds the viral DNA and then recruits the host DNA polymerase to start replication. In Human papillomavirus 23, this protein is Replication protein E1.